The sequence spans 236 residues: 2-C-methyl-D-erythritol 4-phosphate cytidylyltransferase (236 aa).

Belongs to the IspD/TarI cytidylyltransferase family. IspD subfamily.

The enzyme catalyses 2-C-methyl-D-erythritol 4-phosphate + CTP + H(+) = 4-CDP-2-C-methyl-D-erythritol + diphosphate. The protein operates within isoprenoid biosynthesis; isopentenyl diphosphate biosynthesis via DXP pathway; isopentenyl diphosphate from 1-deoxy-D-xylulose 5-phosphate: step 2/6. Functionally, catalyzes the formation of 4-diphosphocytidyl-2-C-methyl-D-erythritol from CTP and 2-C-methyl-D-erythritol 4-phosphate (MEP). In Burkholderia multivorans (strain ATCC 17616 / 249), this protein is 2-C-methyl-D-erythritol 4-phosphate cytidylyltransferase.